Here is a 4981-residue protein sequence, read N- to C-terminus: Protocadherin Fat 4 (4981 aa).

Positions 1-38 (MDLAPDRATGRPWLPLHTLSVSQLLRVFWLLSLLPGQA) are cleaved as a signal peptide. The Extracellular portion of the chain corresponds to 39-4504 (WVHGAEPRQV…PEEISLPLWA (4466 aa)). Cadherin domains follow at residues 43–135 (AEPR…APVF), 136–250 (PDPS…PPVF), 251–353 (GSSH…DPVV), 359–475 (PATS…PPVF), 476–582 (SQQV…KPVF), 584–689 (QPEG…SPVF), 690–793 (YPVQ…PPVF), 794–893 (SQVA…SPHF), 894–996 (LQAI…SPVF), 997–1100 (DQLS…RPLF), 1101–1210 (NSTN…APKF), 1211–1315 (LKDF…TPSF), 1316–1420 (PKST…PPSF), 1421–1529 (PPGD…VPMF), 1529–1629 (FISQ…GPVF), 1630–1740 (TQPK…PPVF), 1741–1841 (PTDM…TPKF), 1842–1944 (SRPV…PPIF), 1945–2051 (SLNS…PPTF), 2051–2154 (FLSP…NPIF), 2155–2259 (AQAL…VPVF), 2260–2364 (ELSP…VPTF), 2365–2466 (ASKA…PPRF), 2467–2567 (QHHP…FPKV), 2568–2669 (RAKE…APIF), 2670–2773 (KEDP…APRF), 2773–2872 (FSQI…APRF), 2873–2983 (SRTS…APQF), 2984–3089 (LKSK…TPEF), 3090–3194 (SQSH…SPVF), 3195–3298 (LSDD…VPRF), 3299–3404 (VSKL…PPIF), 3405–3510 (TLNI…GPML), and 3509–3620 (MLTV…VEIF). N84 and N237 each carry an N-linked (GlcNAc...) asparagine glycan. N393, N416, N435, N483, N551, N615, N676, N721, N825, N880, N946, N1085, N1101, N1104, N1225, N1296, N1389, and N1514 each carry an N-linked (GlcNAc...) asparagine glycan. 4 N-linked (GlcNAc...) asparagine glycosylation sites follow: N1828, N1899, N1967, and N2119. 2 N-linked (GlcNAc...) asparagine glycosylation sites follow: N2387 and N2430. 7 N-linked (GlcNAc...) asparagine glycosylation sites follow: N2921, N2937, N3036, N3140, N3217, N3392, and N3477. N-linked (GlcNAc...) asparagine glycans are attached at residues N3706 and N3758. An EGF-like 1 domain is found at 3802-3860 (DHDSCVHGPCQNGGSCLRRLAVSSVLKSRESLPVIIVANEPLQPFLCKCLPGYAGSWCE). 12 cysteine pairs are disulfide-bonded: C3806–C3817, C3811–C3848, C3850–C3859, C3866–C3877, C3871–C3886, C3888–C3897, C3904–C3915, C3909–C3924, C3926–C3935, C3942–C3953, C3947–C3962, and C3964–C3973. One can recognise an EGF-like 2; calcium-binding domain in the interval 3862 to 3898 (DIDECLPSPCHSGGTCHNLVGGFSCSCPDGFTGRACE). Residues 3900–3936 (DINECLQSPCKNGAICQNFPGSFNCVCKTGYTGKMCE) enclose the EGF-like 3; calcium-binding domain. The region spanning 3938-3974 (SVNYCECNPCFNGGSCQSGVDSYYCHCPFGVFGKHCE) is the EGF-like 4 domain. The region spanning 3975-4159 (LNSYGFEELS…LAAQGILDQC (185 aa)) is the Laminin G-like 1 domain. Residue N4017 is glycosylated (N-linked (GlcNAc...) asparagine). 4 disulfides stabilise this stretch: C4133/C4159, C4166/C4177, C4171/C4186, and C4188/C4197. The EGF-like 5 domain occupies 4162–4198 (LEGACTRSPCQHGGTCMDYWSWQQCHCKEGLTGKYCE). Residues 4217 to 4398 (YHMSQNEKRE…KTDPSVKIGC (182 aa)) enclose the Laminin G-like 2 domain. N4267 and N4312 each carry an N-linked (GlcNAc...) asparagine glycan. 4 cysteine pairs are disulfide-bonded: C4365-C4398, C4430-C4441, C4435-C4451, and C4453-C4462. The EGF-like 6 domain occupies 4426–4463 (PPGDCASHPCQNGGSCEPGLHSGFTCSCPDSHTGRTCE). Residues 4505–4525 (VPAIVGSCATVLALLVLSLIL) traverse the membrane as a helical segment. The Cytoplasmic segment spans residues 4526-4981 (CNQCRGKKAK…PKDGEAEQYV (456 aa)). 5 disordered regions span residues 4534–4584 (AKNP…PDII), 4680–4713 (QGLR…STFY), 4752–4856 (RSKS…MEYD), 4869–4911 (KLSQ…AAPG), and 4957–4981 (AAAN…EQYV). The segment covering 4680–4699 (QGLRTSSLSHSACPTPNPLS) has biased composition (polar residues). Positions 4706 to 4795 (FSKSSTFYRN…GLSIEEVERL (90 aa)) are necessary and sufficient for interaction with MPDZ. Residues 4809 to 4821 (DHGRSSSEEDCRR) show a composition bias toward basic and acidic residues. S4876 is subject to Phosphoserine. Positions 4971 to 4981 (VPKDGEAEQYV) are enriched in basic and acidic residues.

As to quaternary structure, heterophilic interaction with DCHS1; this interaction affects their respective protein levels. Interacts (via cytoplasmic domain) with MPDZ. Forms a complex with PALS1 and MPDZ. Widely expressed. Expressed in fetal brain, infant brain, brain tumor and colorectal cancer.

The protein resides in the membrane. Functionally, cadherins are calcium-dependent cell adhesion proteins. FAT4 plays a role in the maintenance of planar cell polarity as well as in inhibition of YAP1-mediated neuroprogenitor cell proliferation and differentiation. This chain is Protocadherin Fat 4 (FAT4), found in Homo sapiens (Human).